A 570-amino-acid chain; its full sequence is Protein HEATR9 (570 aa).

This chain is Protein HEATR9 (HEATR9), found in Homo sapiens (Human).